The sequence spans 498 residues: Zinc finger protein 395 (498 aa).

Residues 129-165 are disordered; it reads QKPLSSPIEQSLPTSPGATSTSAQRSVSRSIDVPKRR. The span at 130-157 shows a compositional bias: polar residues; it reads KPLSSPIEQSLPTSPGATSTSAQRSVSR. Residues 171-180 carry the Nuclear export signal motif; that stretch reads MDEMMAAMVL. Residues 209–245 are disordered; that stretch reads KEGGDVSDSGSSTTSGHWSASSGVSTPSPPHTDASPK. Residues 214-231 show a composition bias toward low complexity; the sequence is VSDSGSSTTSGHWSASSG. The segment at 285–310 adopts a C2H2-type zinc-finger fold; it reads YKCLWPNCGKLLRSIVGIKRHVKTQH.

Its subcellular location is the cytoplasm. It is found in the nucleus. In Xenopus laevis (African clawed frog), this protein is Zinc finger protein 395 (znf395).